The following is a 74-amino-acid chain: Small ribosomal subunit protein bS18 (74 aa).

Belongs to the bacterial ribosomal protein bS18 family. In terms of assembly, part of the 30S ribosomal subunit. Forms a tight heterodimer with protein bS6.

Its function is as follows. Binds as a heterodimer with protein bS6 to the central domain of the 16S rRNA, where it helps stabilize the platform of the 30S subunit. This Sphingopyxis alaskensis (strain DSM 13593 / LMG 18877 / RB2256) (Sphingomonas alaskensis) protein is Small ribosomal subunit protein bS18.